Consider the following 778-residue polypeptide: Lon protease (778 aa).

The Lon N-terminal domain occupies 6–207; that stretch reads LPLMALRDMV…TVISMLNSNI (202 aa). Residue 356-363 coordinates ATP; the sequence is GPPGVGKT. Residues 592–773 enclose the Lon proteolytic domain; it reads EDQIGSTTGL…DQVLKHALVG (182 aa). Active-site residues include serine 679 and lysine 722.

The protein belongs to the peptidase S16 family. In terms of assembly, homohexamer. Organized in a ring with a central cavity.

The protein localises to the cytoplasm. It catalyses the reaction Hydrolysis of proteins in presence of ATP.. In terms of biological role, ATP-dependent serine protease that mediates the selective degradation of mutant and abnormal proteins as well as certain short-lived regulatory proteins. Required for cellular homeostasis and for survival from DNA damage and developmental changes induced by stress. Degrades polypeptides processively to yield small peptide fragments that are 5 to 10 amino acids long. Binds to DNA in a double-stranded, site-specific manner. The sequence is that of Lon protease from Rickettsia conorii (strain ATCC VR-613 / Malish 7).